A 272-amino-acid polypeptide reads, in one-letter code: Type III pantothenate kinase (272 aa).

6–13 contributes to the ATP binding site; sequence DVRNTHTV. Residue 109–112 coordinates substrate; the sequence is GADR. Aspartate 111 (proton acceptor) is an active-site residue. Aspartate 131 is a K(+) binding site. Serine 134 is a binding site for ATP. Substrate is bound at residue threonine 186.

Belongs to the type III pantothenate kinase family. Homodimer. Requires NH4(+) as cofactor. K(+) serves as cofactor.

It localises to the cytoplasm. The catalysed reaction is (R)-pantothenate + ATP = (R)-4'-phosphopantothenate + ADP + H(+). It participates in cofactor biosynthesis; coenzyme A biosynthesis; CoA from (R)-pantothenate: step 1/5. Its function is as follows. Catalyzes the phosphorylation of pantothenate (Pan), the first step in CoA biosynthesis. The polypeptide is Type III pantothenate kinase (Mycobacterium bovis (strain BCG / Pasteur 1173P2)).